The following is a 91-amino-acid chain: Gem-associated protein 7 homolog (91 aa).

In terms of domain architecture, Sm spans Leu-18–Gln-86.

Belongs to the gemin-7 family. As to quaternary structure, part of the core SMN complex at least composed of smn1, yip11/gem2, gem6, gem7 and gem8. Interacts with gem6; the interaction is direct. Interacts with gem8; the interaction is direct.

The sequence is that of Gem-associated protein 7 homolog from Schizosaccharomyces pombe (strain 972 / ATCC 24843) (Fission yeast).